The following is a 54-amino-acid chain: Califin-C (54 aa).

Cysteine 25 and cysteine 53 are joined by a disulfide. Leucine 36 carries the post-translational modification Leucine amide.

It belongs to the molluscan ELH family. In terms of assembly, this protein consists of a large 36-residue subunit, bound by a single disulfide-bond to a small 18-residue subunit.

It is found in the secreted. Injected in sexually mature animals califin C excites LB and LC cells of the abdominal ganglion and cause egg-laying. In Aplysia californica (California sea hare), this protein is Califin-C.